The following is a 67-amino-acid chain: U-myrmeciitoxin(01)-Mg4a (67 aa).

A signal peptide spans 1-25; that stretch reads MGKVFFFVLMIAIIGSTFLIEEALG.

Belongs to the ant myrmeciitoxin-01 family. Homodimer; disulfide-linked. Post-translationally, contains 2 intrachain disulfide bonds (one per chain) and 1 interchain disulfide bond. Expressed by the venom gland.

The protein localises to the secreted. In Myrmecia gulosa (Red bulldog ant), this protein is U-myrmeciitoxin(01)-Mg4a.